The chain runs to 382 residues: S-adenosylmethionine synthase (382 aa).

H14 is a binding site for ATP. Residue D16 participates in Mg(2+) binding. A K(+)-binding site is contributed by E42. The L-methionine site is built by E55 and Q91. The segment at 91-101 (QSENIAMGVNL) is flexible loop. ATP contacts are provided by residues 156 to 158 (DMK), 222 to 223 (KF), D231, 237 to 238 (RK), A254, and K258. Position 231 (D231) interacts with L-methionine. K262 contributes to the L-methionine binding site.

This sequence belongs to the AdoMet synthase family. In terms of assembly, homotetramer; dimer of dimers. Mg(2+) is required as a cofactor. It depends on K(+) as a cofactor.

The protein localises to the cytoplasm. The enzyme catalyses L-methionine + ATP + H2O = S-adenosyl-L-methionine + phosphate + diphosphate. Its pathway is amino-acid biosynthesis; S-adenosyl-L-methionine biosynthesis; S-adenosyl-L-methionine from L-methionine: step 1/1. In terms of biological role, catalyzes the formation of S-adenosylmethionine (AdoMet) from methionine and ATP. The overall synthetic reaction is composed of two sequential steps, AdoMet formation and the subsequent tripolyphosphate hydrolysis which occurs prior to release of AdoMet from the enzyme. This is S-adenosylmethionine synthase from Mycoplasmopsis synoviae (strain 53) (Mycoplasma synoviae).